The primary structure comprises 209 residues: Zinc finger SWIM domain-containing protein sws1 (209 aa).

Over residues 1–30 (MQQGHFTSNSYHSKTLNSSSLPVSSKFSHT) the composition is skewed to polar residues. The disordered stretch occupies residues 1 to 33 (MQQGHFTSNSYHSKTLNSSSLPVSSKFSHTNDP). Residues 143–203 (TTIDLKYWYC…HILAASILRA (61 aa)) form an SWIM-type zinc finger.

In terms of assembly, interacts with rdl1, rlp1 and srs2.

It localises to the cytoplasm. It is found in the nucleus. The protein resides in the nucleoplasm. In terms of biological role, involved in early stages of the homologous recombination repair (HRR) pathway of double-stranded DNA breaks arising during DNA replication or induced by DNA-damaging agents. The protein is Zinc finger SWIM domain-containing protein sws1 (sws1) of Schizosaccharomyces pombe (strain 972 / ATCC 24843) (Fission yeast).